The primary structure comprises 322 residues: MDPLSSVQPASYVGFDTITNQIEHRLLKKGFQFNIMVVGQSGLGKSTLINTLFASHLIDSATGDDISALPVTKTTEMKISTHTLVEDRVRLNINVIDTPGFGDFIDNSKAWEPIVKYIKEQHSQYLRKELTAQRERFITDTRVHAILYFLQPNGKELSRLDVEALKRLTEIANVIPVIGKSDTLTLDERTEFRELIQNEFEKYNFKIYPYDSEELTDEELELNRSVRSIIPFAVVGSENEIEINGETFRGRKTRWSAINVEDINQCDFVYLREFLIRTHLQDLIETTSYIHYEGFRARQLIALKENANSRSSAHMSSNAIQR.

Met-1 bears the N-acetylmethionine mark. The 274-residue stretch at Lys-29–Ala-302 folds into the Septin-type G domain. Residues Gly-39–Ser-46 form a G1 motif region. Residues Gly-39 to Ser-46, Thr-74, Gly-100, and Lys-180 to Glu-188 each bind GTP. Positions Asp-97–Gly-100 are G3 motif. Residues Gly-179–Asp-182 are G4 motif. Phosphothreonine is present on Thr-216. 2 residues coordinate GTP: Gly-236 and Arg-251.

Belongs to the TRAFAC class TrmE-Era-EngA-EngB-Septin-like GTPase superfamily. Septin GTPase family. Component of the septin complex which consists of CDC3, CDC10, CDC11, CDC12 and probably SHS1 and rearranges to a cortical collar of highly ordered filaments at the mother-bud-neck. A complex formed by CDC3, CDC10, CDC11 and CDC12 is capable of forming long filaments in vitro and the components seem to be present in a 2:2:2:2 arrangement in vivo. The filaments are proposed to be formed by the end-to-end polymerization of CDC3-CDC12-CDC11 complexes with CDC10 serving as a bridge to bundle the polymers into paired filaments. Component of the GIN4 complex composed of at least BNI5, CDC3, CDC10, CDC11, CDC12, GIN4, NAP1 and SHS1. Self-associates. Interacts with SYP1.

It is found in the membrane. The protein resides in the bud neck. In terms of biological role, septins are GTPases involved in cytokinesis that assemble early in the cell cycle as a patch at the incipient bud site and form a ring approximate 15 minutes before bud emergence, which transforms into an hour-glass shaped collar of cortical filaments that spans both sides of the mother-bud neck. This collar persists until just before cytokinesis, when it splits into two rings that occupy opposite sides of the neck. The septins at the bud neck serve as a structural scaffold that recruits different components involved in diverse processes at specific stages during the cell cycle. Many proteins bind asymmetrically to the septin collar. The septin assembly is regulated by protein kinases GIN4 and/or CLA4. May act by recruiting MYO1 and HOF1, a protein involved in septation, to the site of cleavage. Septins are also involved in cell morphogenesis, bud site selection, chitin deposition, cell cycle regulation, cell compartmentalization and spore wall formation. This is Cell division control protein 10 (CDC10) from Saccharomyces cerevisiae (strain ATCC 204508 / S288c) (Baker's yeast).